The primary structure comprises 185 residues: Peptidyl-tRNA hydrolase (185 aa).

Residue Y14 participates in tRNA binding. The Proton acceptor role is filled by H19. The tRNA site is built by Y65, N67, and N113.

Belongs to the PTH family. Monomer.

The protein localises to the cytoplasm. The enzyme catalyses an N-acyl-L-alpha-aminoacyl-tRNA + H2O = an N-acyl-L-amino acid + a tRNA + H(+). Its function is as follows. Hydrolyzes ribosome-free peptidyl-tRNAs (with 1 or more amino acids incorporated), which drop off the ribosome during protein synthesis, or as a result of ribosome stalling. In terms of biological role, catalyzes the release of premature peptidyl moieties from peptidyl-tRNA molecules trapped in stalled 50S ribosomal subunits, and thus maintains levels of free tRNAs and 50S ribosomes. In Rickettsia canadensis (strain McKiel), this protein is Peptidyl-tRNA hydrolase.